The following is a 322-amino-acid chain: Zinc finger C2HC domain-containing protein zchc-1A (322 aa).

2 consecutive C2HC/C3H-type zinc fingers follow at residues Pro9 to Leu38 and Asp119 to Arg148. Positions 13, 16, 28, 32, 123, 126, 138, and 142 each coordinate Zn(2+). Polar residues predominate over residues Gln150–Gly159. The segment at Gln150–Phe322 is disordered. The segment covering Asn174–Asp220 has biased composition (basic and acidic residues). 2 stretches are compositionally biased toward polar residues: residues Thr221–Ser238 and Leu264–Leu274. The segment covering Thr276 to Ala295 has biased composition (low complexity). A compositionally biased stretch (basic and acidic residues) spans Cys296–Arg305. The segment covering Asn311–Phe322 has biased composition (low complexity).

This sequence belongs to the ZC2HC1 family. Zn(2+) serves as cofactor.

In Caenorhabditis elegans, this protein is Zinc finger C2HC domain-containing protein zchc-1A.